The sequence spans 323 residues: Elongation factor P--(R)-beta-lysine ligase (323 aa).

Residue 76 to 78 (SPE) participates in substrate binding. ATP-binding positions include 100–102 (RNE) and Asn-109. Substrate is bound at residue Tyr-118. Residue 242 to 243 (EL) coordinates ATP. Glu-249 contributes to the substrate binding site. ATP is bound at residue Gly-298.

The protein belongs to the class-II aminoacyl-tRNA synthetase family. EpmA subfamily. As to quaternary structure, homodimer.

It catalyses the reaction D-beta-lysine + L-lysyl-[protein] + ATP = N(6)-((3R)-3,6-diaminohexanoyl)-L-lysyl-[protein] + AMP + diphosphate + H(+). With EpmB is involved in the beta-lysylation step of the post-translational modification of translation elongation factor P (EF-P). Catalyzes the ATP-dependent activation of (R)-beta-lysine produced by EpmB, forming a lysyl-adenylate, from which the beta-lysyl moiety is then transferred to the epsilon-amino group of a conserved specific lysine residue in EF-P. The protein is Elongation factor P--(R)-beta-lysine ligase of Haemophilus influenzae (strain PittGG).